Here is a 295-residue protein sequence, read N- to C-terminus: Tissue factor (295 aa).

An N-terminal signal peptide occupies residues 1-28 (MAIPMRPRLLAALAPTFLGFLLLQVAVG). Over 29-252 (AGTPPGKAFN…TEQWKSVLGE (224 aa)) the chain is Extracellular. N-linked (GlcNAc...) asparagine glycans are attached at residues N38 and N58. Residues C76 and C84 are joined by a disulfide bond. 4 N-linked (GlcNAc...) asparagine glycosylation sites follow: N95, N109, N170, and N201. An intrachain disulfide couples C219 to C242. The short motif at 246–248 (WKS) is the WKS motif element. The helical transmembrane segment at 253–275 (TLIIVGAVVFLVTVFIILLTISL) threads the bilayer. A lipid anchor (S-palmitoyl cysteine) is attached at C276. Residues 276–295 (CKRRKNRAGQKRKNTPSRLA) are Cytoplasmic-facing.

It belongs to the tissue factor family. In terms of assembly, interacts with HSPE; the interaction, inhibited by heparin, promotes the generation of activated factor X and activates coagulation in the presence of activated factor VII.

Its subcellular location is the membrane. Its function is as follows. Initiates blood coagulation by forming a complex with circulating factor VII or VIIa. The [TF:VIIa] complex activates factors IX or X by specific limited proteolysis. TF plays a role in normal hemostasis by initiating the cell-surface assembly and propagation of the coagulation protease cascade. The protein is Tissue factor (F3) of Rattus norvegicus (Rat).